Reading from the N-terminus, the 520-residue chain is Rho GTPase-activating protein gacV (520 aa).

Residues 8 to 28 (NIKTYYIIGIITLIFIVSAVI) traverse the membrane as a helical segment. The stretch at 28-192 (IKNQLSSSNQ…EEQEEEQFSM (165 aa)) forms a coiled coil. Disordered stretches follow at residues 33–73 (SSSN…KLDN), 121–189 (EEKQ…EEEQ), 348–373 (NNNN…NNNE), and 489–520 (LQEQ…DQEE). Positions 52-62 (SKGRGNKKGKK) are enriched in basic residues. Residues 63–73 (PEKIQEKKLDN) show a composition bias toward basic and acidic residues. Residues 140–189 (QEEEEEEEEQQEIEEDEEEEEGQEQEEEEEQQEIEEGEEEQQEEEQEEEQ) are compositionally biased toward acidic residues. Residues 195-472 (VSIERLMDFQ…ILLKQKKEIA (278 aa)) form the Rho-GAP domain. Low complexity predominate over residues 348-372 (NNNNNNNNNNNNNNNNNNDNNNNNN). Residues 480–520 (YFKDEYSKKLQEQNDQEEDNQEEEKDNQEEDEDEEDKDQEE) adopt a coiled-coil conformation. Acidic residues predominate over residues 493-520 (NDQEEDNQEEEKDNQEEDEDEEDKDQEE).

It is found in the membrane. Rho GTPase-activating protein involved in the signal transduction pathway. This is Rho GTPase-activating protein gacV (gacV) from Dictyostelium discoideum (Social amoeba).